Reading from the N-terminus, the 211-residue chain is Transcriptional regulatory protein RcsA (211 aa).

In terms of domain architecture, HTH luxR-type spans 135 to 200 (LDVHPLTLSQ…VIYHVVRLTD (66 aa)). A DNA-binding region (H-T-H motif) is located at residues 159 to 178 (TIQISDKMQIKAKTVSSHKG).

It belongs to the RcsA family.

In terms of biological role, component of the Rcs signaling system, which controls transcription of numerous genes. Binds to DNA to regulate expression of genes. This is Transcriptional regulatory protein RcsA from Pantoea stewartii subsp. stewartii (Erwinia stewartii).